The chain runs to 406 residues: NADH-quinone oxidoreductase subunit D (406 aa).

This sequence belongs to the complex I 49 kDa subunit family. In terms of assembly, NDH-1 is composed of 14 different subunits. Subunits NuoB, C, D, E, F, and G constitute the peripheral sector of the complex.

The protein resides in the cell inner membrane. The catalysed reaction is a quinone + NADH + 5 H(+)(in) = a quinol + NAD(+) + 4 H(+)(out). Functionally, NDH-1 shuttles electrons from NADH, via FMN and iron-sulfur (Fe-S) centers, to quinones in the respiratory chain. The immediate electron acceptor for the enzyme in this species is believed to be ubiquinone. Couples the redox reaction to proton translocation (for every two electrons transferred, four hydrogen ions are translocated across the cytoplasmic membrane), and thus conserves the redox energy in a proton gradient. This is NADH-quinone oxidoreductase subunit D from Acidiphilium cryptum (strain JF-5).